A 173-amino-acid chain; its full sequence is Crossover junction endodeoxyribonuclease RuvC (173 aa).

Catalysis depends on residues aspartate 8, glutamate 69, and aspartate 141. Positions 8, 69, and 141 each coordinate Mg(2+).

It belongs to the RuvC family. In terms of assembly, homodimer which binds Holliday junction (HJ) DNA. The HJ becomes 2-fold symmetrical on binding to RuvC with unstacked arms; it has a different conformation from HJ DNA in complex with RuvA. In the full resolvosome a probable DNA-RuvA(4)-RuvB(12)-RuvC(2) complex forms which resolves the HJ. Requires Mg(2+) as cofactor.

Its subcellular location is the cytoplasm. The catalysed reaction is Endonucleolytic cleavage at a junction such as a reciprocal single-stranded crossover between two homologous DNA duplexes (Holliday junction).. Functionally, the RuvA-RuvB-RuvC complex processes Holliday junction (HJ) DNA during genetic recombination and DNA repair. Endonuclease that resolves HJ intermediates. Cleaves cruciform DNA by making single-stranded nicks across the HJ at symmetrical positions within the homologous arms, yielding a 5'-phosphate and a 3'-hydroxyl group; requires a central core of homology in the junction. The consensus cleavage sequence is 5'-(A/T)TT(C/G)-3'. Cleavage occurs on the 3'-side of the TT dinucleotide at the point of strand exchange. HJ branch migration catalyzed by RuvA-RuvB allows RuvC to scan DNA until it finds its consensus sequence, where it cleaves and resolves the cruciform DNA. In Stenotrophomonas maltophilia (strain K279a), this protein is Crossover junction endodeoxyribonuclease RuvC.